Consider the following 256-residue polypeptide: Geranylgeranylglyceryl phosphate synthase (256 aa).

Mg(2+)-binding residues include aspartate 28 and serine 53. Sn-glycerol 1-phosphate contacts are provided by residues 172–178 (YLEAGSG), 203–204 (GG), and 225–226 (GT).

Belongs to the GGGP/HepGP synthase family. Group II subfamily. Mg(2+) is required as a cofactor.

It is found in the cytoplasm. The enzyme catalyses sn-glycerol 1-phosphate + (2E,6E,10E)-geranylgeranyl diphosphate = sn-3-O-(geranylgeranyl)glycerol 1-phosphate + diphosphate. It participates in membrane lipid metabolism; glycerophospholipid metabolism. Prenyltransferase that catalyzes the transfer of the geranylgeranyl moiety of geranylgeranyl diphosphate (GGPP) to the C3 hydroxyl of sn-glycerol-1-phosphate (G1P). This reaction is the first ether-bond-formation step in the biosynthesis of archaeal membrane lipids. The chain is Geranylgeranylglyceryl phosphate synthase from Methanococcus maripaludis (strain C6 / ATCC BAA-1332).